The sequence spans 273 residues: Bis(5'-nucleosyl)-tetraphosphatase, symmetrical (273 aa).

It belongs to the Ap4A hydrolase family.

It catalyses the reaction P(1),P(4)-bis(5'-adenosyl) tetraphosphate + H2O = 2 ADP + 2 H(+). Its function is as follows. Hydrolyzes diadenosine 5',5'''-P1,P4-tetraphosphate to yield ADP. The polypeptide is Bis(5'-nucleosyl)-tetraphosphatase, symmetrical (Histophilus somni (strain 2336) (Haemophilus somnus)).